The chain runs to 305 residues: Oxygen-dependent coproporphyrinogen-III oxidase (305 aa).

Ser-97 provides a ligand contact to substrate. 2 residues coordinate a divalent metal cation: His-101 and His-111. The Proton donor role is filled by His-111. 113–115 is a binding site for substrate; that stretch reads NVR. Residues His-150 and His-180 each coordinate a divalent metal cation. Positions 245 to 280 are important for dimerization; that stretch reads YVEFNLVWDRGTHFGLQSGGRTESILLSMPPLASWA. 263-265 provides a ligand contact to substrate; sequence GGR.

The protein belongs to the aerobic coproporphyrinogen-III oxidase family. In terms of assembly, homodimer. It depends on a divalent metal cation as a cofactor.

It localises to the cytoplasm. The enzyme catalyses coproporphyrinogen III + O2 + 2 H(+) = protoporphyrinogen IX + 2 CO2 + 2 H2O. The protein operates within porphyrin-containing compound metabolism; protoporphyrin-IX biosynthesis; protoporphyrinogen-IX from coproporphyrinogen-III (O2 route): step 1/1. In terms of biological role, involved in the heme biosynthesis. Catalyzes the aerobic oxidative decarboxylation of propionate groups of rings A and B of coproporphyrinogen-III to yield the vinyl groups in protoporphyrinogen-IX. This chain is Oxygen-dependent coproporphyrinogen-III oxidase, found in Variovorax paradoxus (strain S110).